The following is a 180-amino-acid chain: Large ribosomal subunit protein uL6 (180 aa).

It belongs to the universal ribosomal protein uL6 family. Part of the 50S ribosomal subunit.

Functionally, this protein binds to the 23S rRNA, and is important in its secondary structure. It is located near the subunit interface in the base of the L7/L12 stalk, and near the tRNA binding site of the peptidyltransferase center. This Clostridium botulinum (strain Loch Maree / Type A3) protein is Large ribosomal subunit protein uL6.